The sequence spans 123 residues: WAP four-disulfide core domain protein 5 (123 aa).

Residues 1–24 (MRIQSLLLLGALLAVGSQLPAVFG) form the signal peptide. WAP domains follow at residues 27 to 73 (KGEK…CVPR) and 74 to 121 (VSVK…RDPA). Disulfide bonds link Cys-34–Cys-62, Cys-41–Cys-66, Cys-49–Cys-61, Cys-55–Cys-70, Cys-81–Cys-109, Cys-88–Cys-113, Cys-96–Cys-108, and Cys-102–Cys-117.

Its subcellular location is the secreted. Putative acid-stable proteinase inhibitor. This is WAP four-disulfide core domain protein 5 (WFDC5) from Pongo abelii (Sumatran orangutan).